Consider the following 98-residue polypeptide: MRPGRPLAGFYATLRRSFRRMSKRSKNKAKKERVPVEDRPPTPMPTSQRLIRRNALGGGVRPDAEDCIQRFHPLEPALGVSTKNFDLLSLRCELGWCG.

The segment covering 19-31 (RRMSKRSKNKAKK) has biased composition (basic residues). A disordered region spans residues 19–47 (RRMSKRSKNKAKKERVPVEDRPPTPMPTS).

This sequence belongs to the lymphocryptovirus BNLF2b family.

This is an uncharacterized protein from Homo sapiens (Human).